The chain runs to 78 residues: Conotoxin Cal6.3a (78 aa).

An N-terminal signal peptide occupies residues 1-21; that stretch reads MRFLHFLIVAVLLASFMESGA. Residues 22–26 constitute a propeptide that is removed on maturation; the sequence is MPRNP. 3 cysteine pairs are disulfide-bonded: Cys-38-Cys-49, Cys-41-Cys-53, and Cys-48-Cys-56. Gln-76 bears the Glutamine amide mark.

In terms of tissue distribution, expressed by the venom duct.

Its subcellular location is the secreted. Probable neurotoxin with unknown target. Possibly targets ion channels. The chain is Conotoxin Cal6.3a from Californiconus californicus (California cone).